The chain runs to 263 residues: 3-methyl-2-oxobutanoate hydroxymethyltransferase (263 aa).

Positions 45 and 84 each coordinate Mg(2+). Residues 45 to 46, D84, and K112 each bind 3-methyl-2-oxobutanoate; that span reads DS. Position 114 (E114) interacts with Mg(2+). E180 acts as the Proton acceptor in catalysis.

This sequence belongs to the PanB family. Homodecamer; pentamer of dimers. Requires Mg(2+) as cofactor.

Its subcellular location is the cytoplasm. The catalysed reaction is 3-methyl-2-oxobutanoate + (6R)-5,10-methylene-5,6,7,8-tetrahydrofolate + H2O = 2-dehydropantoate + (6S)-5,6,7,8-tetrahydrofolate. It participates in cofactor biosynthesis; (R)-pantothenate biosynthesis; (R)-pantoate from 3-methyl-2-oxobutanoate: step 1/2. In terms of biological role, catalyzes the reversible reaction in which hydroxymethyl group from 5,10-methylenetetrahydrofolate is transferred onto alpha-ketoisovalerate to form ketopantoate. This is 3-methyl-2-oxobutanoate hydroxymethyltransferase from Citrobacter koseri (strain ATCC BAA-895 / CDC 4225-83 / SGSC4696).